The chain runs to 193 residues: Large ribosomal subunit protein bL17m (193 aa).

Belongs to the bacterial ribosomal protein bL17 family. As to quaternary structure, component of the mitochondrial large ribosomal subunit (mt-LSU). Mature N.crassa 74S mitochondrial ribosomes consist of a small (37S) and a large (54S) subunit. The 37S small subunit contains a 16S ribosomal RNA (16S mt-rRNA) and 32 different proteins. The 54S large subunit contains a 23S rRNA (23S mt-rRNA) and 42 different proteins.

Its subcellular location is the mitochondrion. Component of the mitochondrial ribosome (mitoribosome), a dedicated translation machinery responsible for the synthesis of mitochondrial genome-encoded proteins, including at least some of the essential transmembrane subunits of the mitochondrial respiratory chain. The mitoribosomes are attached to the mitochondrial inner membrane and translation products are cotranslationally integrated into the membrane. This Neurospora crassa (strain ATCC 24698 / 74-OR23-1A / CBS 708.71 / DSM 1257 / FGSC 987) protein is Large ribosomal subunit protein bL17m (mrpl8).